The primary structure comprises 476 residues: Calcitonin gene-related peptide type 1 receptor (476 aa).

Positions 1-33 (METLQMGLLSRSALFKYIIIFLIMINTRGYVLA) are cleaved as a signal peptide. Topologically, residues 34–154 (SQEQEAKTSV…FTHEKVKTAL (121 aa)) are extracellular. Cystine bridges form between cysteine 63-cysteine 89, cysteine 80-cysteine 120, and cysteine 103-cysteine 142. N-linked (GlcNAc...) asparagine glycans are attached at residues asparagine 81, asparagine 133, and asparagine 138. The helical transmembrane segment at 155–179 (NLYYLTIIGHGLSIASLLISLGIFF) threads the bilayer. The Cytoplasmic portion of the chain corresponds to 180 to 190 (YFKNLSCQRIT). A helical transmembrane segment spans residues 191–213 (LHKNLFFSFVCNSIITIISLSAV). The Extracellular segment spans residues 214 to 224 (ANNQALVATNP). The helical transmembrane segment at 225–253 (VICKISQFIHLYLMGCNYFWMLCEGIYLH) threads the bilayer. At 254 to 267 (TLIVVAVFAEKQHL) the chain is on the cytoplasmic side. The helical transmembrane segment at 268-288 (MWYYLLGWGFPLIPACIHAVA) threads the bilayer. Topologically, residues 289–304 (RSLYYNDNCWISSETH) are extracellular. A helical transmembrane segment spans residues 305–329 (LLYIIHGPICAALLVNLFFLLNIVR). Residues 330–344 (VLITKLKVTHQAESN) lie on the Cytoplasmic side of the membrane. A helical transmembrane segment spans residues 345–366 (LYMKAVRATLILVPLLGIEFVL). Over 367 to 381 (FPWKPEGRIAEEIYD) the chain is Extracellular. Residues 382 to 402 (YVMHILMHYQGLLVATIFCFF) form a helical membrane-spanning segment. Topologically, residues 403–476 (NGEVQAVLKR…VFFKTEKQYM (74 aa)) are cytoplasmic.

It belongs to the G-protein coupled receptor 2 family.

Its subcellular location is the cell membrane. Functionally, may function as G protein-coupled receptor for calcitonin-gene-related peptides and adrenomedullin. Specificity may be modulated by accessory proteins. May activate cAMP-dependent pathway. The chain is Calcitonin gene-related peptide type 1 receptor (calcrl) from Xenopus laevis (African clawed frog).